We begin with the raw amino-acid sequence, 2327 residues long: Pre-mRNA-processing-splicing factor 8 homolog (2327 aa).

Over residues 1–14 the composition is skewed to polar residues; it reads MDDTNSNINQSNES. Residues 1 to 20 are disordered; it reads MDDTNSNINQSNESQHLEEK. The tract at residues 801-1292 is reverse transcriptase homology domain; the sequence is TTVHWLEKRR…KIQTRVKIGL (492 aa). The linker stretch occupies residues 1293 to 1566; that stretch reads NSKMPNRFPP…TLKISLIQIF (274 aa). The segment at 1502-1515 is important for branch point selection; sequence MKYKKLTHAQRSGL. Residues 1570–1740 form a restriction endonuclease homology domain region; that stretch reads LWQKIHESLV…LRERIRKGLQ (171 aa). The involved in interaction with pre-mRNA 5' splice site stretch occupies residues 1657–2023; the sequence is GDFDSHDIER…QIAEIEKQKT (367 aa). The RNase H homology domain stretch occupies residues 1755–2008; the sequence is NFGELFSNKI…ILGMEISAPS (254 aa). In terms of domain architecture, MPN spans 2093 to 2223; it reads TYVFPKNILK…LTAYHLTPSG (131 aa).

In terms of assembly, part of the U5 snRNP complex and of the U4/U6-U5 tri-snRNP complex.

The protein localises to the nucleus speckle. Its function is as follows. Functions as a scaffold that mediates the ordered assembly of spliceosomal proteins and snRNAs. Required for the assembly of the U4/U6-U5 tri-snRNP complex. Functions as a scaffold that positions spliceosomal U2, U5 and U6 snRNAs at splice sites on pre-mRNA substrates, so that splicing can occur. Interacts with both the 5' and the 3' splice site. The chain is Pre-mRNA-processing-splicing factor 8 homolog (prpf8) from Dictyostelium discoideum (Social amoeba).